We begin with the raw amino-acid sequence, 364 residues long: Valine dehydrogenase (364 aa).

The active site involves Lys-91. 191-197 contributes to the NAD(+) binding site; it reads GVGKVGH.

The protein belongs to the Glu/Leu/Phe/Val dehydrogenases family. As to quaternary structure, homodimer.

The protein resides in the cytoplasm. It catalyses the reaction L-valine + NAD(+) + H2O = 3-methyl-2-oxobutanoate + NH4(+) + NADH + H(+). Its pathway is amino-acid degradation; L-valine degradation. Its activity is regulated as follows. Inhibited by pyridoxal 5'-phosphate (PLP). Its function is as follows. Oxidative deamination of branched-chain amino acids. Oxidizes L-valine and L-alpha-aminobutyric acid efficiently, and L-alanine and L-isoleucine less efficiently. D-valine and L-glutamate were not substrates for the enzyme. The catabolism of valine is the major source of fatty acid precursors for macrolide biosynthesis and a vital source of antibiotic precursors. The chain is Valine dehydrogenase from Streptomyces albus (strain ATCC 21838 / DSM 41398 / FERM P-419 / JCM 4703 / NBRC 107858).